A 476-amino-acid chain; its full sequence is Transcriptional regulator claA (476 aa).

Residues 25–52 (CDTCLKAKIKCSQAKPTCARCLQQGRQC) constitute a DNA-binding region (zn(2)-C6 fungal-type). The tract at residues 63–92 (PSTKNLPLDQLQQPKGRTAGGTARRSLSRR) is disordered. Residues 64 to 77 (STKNLPLDQLQQPK) show a composition bias toward polar residues.

It is found in the nucleus. Transcriptional regulator; part of the cla gene cluster that produces clavatol and ortho-quinone methide. The clavatol biosynthesis cluster cla and the terrestric acid cluster tra are both involved in the production of peniphenones and penilactones. The protein is Transcriptional regulator claA of Penicillium crustosum (Blue mold fungus).